We begin with the raw amino-acid sequence, 1480 residues long: Tubulin-specific chaperone D (1480 aa).

Disordered regions lie at residues 1 to 32 (MENSEDISLNSSEKSIESSVVNLEDQQQSQQQ) and 453 to 476 (NNNNNNNNNENNNEEGEEEEEEIP). 2 stretches are compositionally biased toward low complexity: residues 7 to 32 (ISLNSSEKSIESSVVNLEDQQQSQQQ) and 453 to 463 (NNNNNNNNNEN). Over residues 464-476 (NNEEGEEEEEEIP) the composition is skewed to acidic residues. The stretch at 482–520 (ILEEIMKSLKDKDTIIRWTSAKAIGRIVNLLPKDMGDQV) is one HEAT 1 repeat. Positions 859 to 880 (KPIITPPSSKSTTNNNNNNNNN) are disordered. The HEAT 2 repeat unit spans residues 886–922 (EIAFNIILGYLNENLNHPNEEVQKEASKAFELLFSKY). Residues 1437–1480 (NPHKQSDDNNNNNNGELINNNTENNNNNNFDDNLPEDSQDLMEI) form a disordered region. The span at 1444 to 1468 (DNNNNNNGELINNNTENNNNNNFDD) shows a compositional bias: low complexity. Residues 1469-1480 (NLPEDSQDLMEI) show a composition bias toward acidic residues.

The protein belongs to the TBCD family. As to quaternary structure, supercomplex made of cofactors A to E. Cofactors A and D function by capturing and stabilizing tubulin in a quasi-native conformation. Cofactor E binds to the cofactor D-tubulin complex; interaction with cofactor C then causes the release of tubulin polypeptides that are committed to the native state.

Its function is as follows. Tubulin-folding protein; involved in the first step of the tubulin folding pathway. The chain is Tubulin-specific chaperone D (tbcd) from Dictyostelium discoideum (Social amoeba).